The chain runs to 540 residues: Chaperonin GroEL (540 aa).

ATP-binding positions include 29–32 (TLGP), 86–90 (DGTTT), Gly413, and Asp493. Positions 520-540 (AEKPEPKPAPGPADPGAGMDF) are disordered.

Belongs to the chaperonin (HSP60) family. Forms a cylinder of 14 subunits composed of two heptameric rings stacked back-to-back. Interacts with the co-chaperonin GroES.

It localises to the cytoplasm. The enzyme catalyses ATP + H2O + a folded polypeptide = ADP + phosphate + an unfolded polypeptide.. Its function is as follows. Together with its co-chaperonin GroES, plays an essential role in assisting protein folding. The GroEL-GroES system forms a nano-cage that allows encapsulation of the non-native substrate proteins and provides a physical environment optimized to promote and accelerate protein folding. The polypeptide is Chaperonin GroEL (Tropheryma whipplei (Whipple's bacillus)).